The sequence spans 339 residues: Dihydroorotate dehydrogenase (quinone) (339 aa).

FMN contacts are provided by residues 62 to 66 and T86; that span reads AGMDK. K66 lines the substrate pocket. Substrate is bound at residue 111–115; the sequence is NRMGF. Positions 139 and 172 each coordinate FMN. N172 serves as a coordination point for substrate. The active-site Nucleophile is the S175. N177 provides a ligand contact to substrate. Positions 217 and 245 each coordinate FMN. A substrate-binding site is contributed by 246-247; that stretch reads NT. Residues G268, G297, and 318–319 contribute to the FMN site; that span reads YS.

It belongs to the dihydroorotate dehydrogenase family. Type 2 subfamily. Monomer. FMN serves as cofactor.

Its subcellular location is the cell membrane. The enzyme catalyses (S)-dihydroorotate + a quinone = orotate + a quinol. It functions in the pathway pyrimidine metabolism; UMP biosynthesis via de novo pathway; orotate from (S)-dihydroorotate (quinone route): step 1/1. Catalyzes the conversion of dihydroorotate to orotate with quinone as electron acceptor. In Shewanella sp. (strain ANA-3), this protein is Dihydroorotate dehydrogenase (quinone).